Reading from the N-terminus, the 313-residue chain is ADP-L-glycero-D-manno-heptose-6-epimerase (313 aa).

NADP(+) is bound by residues 10–11 (MI), 31–32 (DN), Lys-38, Arg-53, 75–79 (EGACS), and Asn-92. Residue Tyr-139 is the Proton acceptor of the active site. Lys-143 serves as a coordination point for NADP(+). Substrate is bound at residue Asn-174. NADP(+) is bound by residues Val-175 and Lys-183. The active-site Proton acceptor is the Lys-183. Residues Ser-185, His-192, 206 to 209 (FAGS), Arg-214, and Tyr-277 each bind substrate.

The protein belongs to the NAD(P)-dependent epimerase/dehydratase family. HldD subfamily. Homopentamer. The cofactor is NADP(+).

It catalyses the reaction ADP-D-glycero-beta-D-manno-heptose = ADP-L-glycero-beta-D-manno-heptose. The protein operates within nucleotide-sugar biosynthesis; ADP-L-glycero-beta-D-manno-heptose biosynthesis; ADP-L-glycero-beta-D-manno-heptose from D-glycero-beta-D-manno-heptose 7-phosphate: step 4/4. It participates in bacterial outer membrane biogenesis; LPS core biosynthesis. Functionally, catalyzes the interconversion between ADP-D-glycero-beta-D-manno-heptose and ADP-L-glycero-beta-D-manno-heptose via an epimerization at carbon 6 of the heptose. This Vibrio vulnificus (strain CMCP6) protein is ADP-L-glycero-D-manno-heptose-6-epimerase.